The following is a 347-amino-acid chain: N-acetyl-gamma-glutamyl-phosphate reductase (347 aa).

Cys152 is an active-site residue.

It belongs to the NAGSA dehydrogenase family. Type 1 subfamily.

The protein localises to the cytoplasm. It carries out the reaction N-acetyl-L-glutamate 5-semialdehyde + phosphate + NADP(+) = N-acetyl-L-glutamyl 5-phosphate + NADPH + H(+). The protein operates within amino-acid biosynthesis; L-arginine biosynthesis; N(2)-acetyl-L-ornithine from L-glutamate: step 3/4. In terms of biological role, catalyzes the NADPH-dependent reduction of N-acetyl-5-glutamyl phosphate to yield N-acetyl-L-glutamate 5-semialdehyde. The polypeptide is N-acetyl-gamma-glutamyl-phosphate reductase (Neisseria gonorrhoeae (strain ATCC 700825 / FA 1090)).